The sequence spans 486 residues: Glutamyl-tRNA(Gln) amidotransferase subunit A (486 aa).

Active-site charge relay system residues include Lys-76 and Ser-151. The active-site Acyl-ester intermediate is the Ser-175.

The protein belongs to the amidase family. GatA subfamily. As to quaternary structure, heterotrimer of A, B and C subunits.

It catalyses the reaction L-glutamyl-tRNA(Gln) + L-glutamine + ATP + H2O = L-glutaminyl-tRNA(Gln) + L-glutamate + ADP + phosphate + H(+). Functionally, allows the formation of correctly charged Gln-tRNA(Gln) through the transamidation of misacylated Glu-tRNA(Gln) in organisms which lack glutaminyl-tRNA synthetase. The reaction takes place in the presence of glutamine and ATP through an activated gamma-phospho-Glu-tRNA(Gln). The sequence is that of Glutamyl-tRNA(Gln) amidotransferase subunit A from Nitrosomonas eutropha (strain DSM 101675 / C91 / Nm57).